A 965-amino-acid chain; its full sequence is Valine--tRNA ligase (965 aa).

Polar residues predominate over residues 1–12 (MEKTPATQTQAE). The segment at 1 to 23 (MEKTPATQTQAEPSLDKTYNPKE) is disordered. The 'HIGH' region motif lies at 56-66 (PNVTGSLHMGH). The 'KMSKS' region motif lies at 568–572 (KMSKS). ATP is bound at residue lysine 571. The stretch at 893 to 960 (MAGLVDKEAE…SKEKLLAQKE (68 aa)) forms a coiled coil.

It belongs to the class-I aminoacyl-tRNA synthetase family. ValS type 1 subfamily. In terms of assembly, monomer.

It is found in the cytoplasm. The enzyme catalyses tRNA(Val) + L-valine + ATP = L-valyl-tRNA(Val) + AMP + diphosphate. Catalyzes the attachment of valine to tRNA(Val). As ValRS can inadvertently accommodate and process structurally similar amino acids such as threonine, to avoid such errors, it has a 'posttransfer' editing activity that hydrolyzes mischarged Thr-tRNA(Val) in a tRNA-dependent manner. The polypeptide is Valine--tRNA ligase (Photorhabdus laumondii subsp. laumondii (strain DSM 15139 / CIP 105565 / TT01) (Photorhabdus luminescens subsp. laumondii)).